A 177-amino-acid polypeptide reads, in one-letter code: GTP-dependent dephospho-CoA kinase (177 aa).

Positions 25, 31, 48, 49, 50, 67, 69, 124, and 147 each coordinate GTP.

It belongs to the GTP-dependent DPCK family. In terms of assembly, monomer in solution.

It carries out the reaction 3'-dephospho-CoA + GTP = GDP + CoA + H(+). It participates in cofactor biosynthesis; coenzyme A biosynthesis. Its function is as follows. Catalyzes the GTP-dependent phosphorylation of the 3'-hydroxyl group of dephosphocoenzyme A to form coenzyme A (CoA). Can also use UTP, with lower efficiency and has weak activity with ATP, but shows a strong preference for GTP as the phosphate donor. The polypeptide is GTP-dependent dephospho-CoA kinase (Thermococcus kodakarensis (strain ATCC BAA-918 / JCM 12380 / KOD1) (Pyrococcus kodakaraensis (strain KOD1))).